The chain runs to 529 residues: MADADARAPPKSDPGATPIGSISPSSAAPAAGEDEVEVEVEVEEQLAGLAIADQGEELLLPKPTGWEDGPVVVAGDEVSGGEKLPGEVAAAVGVEGAAADSRPRFPRRPGEPDCTYYVKFGSCRFGMKCKFNHPARKKKSRVKGSNGGSGSGGSNSSSNKASSPDDEQQAPKEEYGSYVPDISPEVDSLGFADKGSASNLENFKKYSYEIIDVKKGRVEPKELKVAKEKRKEFISEGSSQEECKYYSTPGGCKFGKACKYLHRDGKEGKTDAEKVDLNFLGLPLRPGEKECPYYMRTGSCKYATNCKFHHPDPSNVASKDPQLEHENGDAPQQDVQGSSSQPNASIWPDQRTVNEHHVPFIAPSPSYSAGMLPPQGMYPPPEWNGYHQVPLNPYYPPGVPFQHFPAAPINHPMYKAPEIPGHQQVPSEEYPERPGQPECQHFVKSGFCKFRMKCKYHHPRSPVPPAGALSPLGLPIKPDQPVCTYYGRYGVCKFGPACAYNHPFNFSPVPAAGPPLLPAQYPTPGNYTL.

A compositionally biased stretch (basic and acidic residues) spans methionine 1 to proline 10. 2 disordered regions span residues methionine 1 to valine 36 and proline 134 to valine 179. Over residues proline 14–alanine 31 the composition is skewed to low complexity. C3H1-type zinc fingers lie at residues arginine 108–arginine 136, glycine 237–glycine 265, and arginine 285–proline 313. The segment at proline 313–tryptophan 347 is disordered. Residues glutamine 333–alanine 344 are compositionally biased toward polar residues. 2 C3H1-type zinc fingers span residues arginine 433 to serine 461 and lysine 477 to asparagine 505.

The chain is Zinc finger CCCH domain-containing protein 65 from Oryza sativa subsp. japonica (Rice).